A 1296-amino-acid chain; its full sequence is MADPDAIYELAQRIESNIEVDKRVAALHSLQSLLESAGHVVEADAVTSAVKVALRHANQALSTASLSFIPTYASMIYSGDATDSHSLLNHNVRMLVNSVGLLVIDKLGDQKERIREAARTALIELGNAAYAISSGHLTTSGKGKETETPLGIFERTLREAGLAAKFARVREQSVLLLPILRQSCEKYPIRPLLSTTVELLLDADATVREGARSTLITLFSSATPAAKADLKKELEKRAVRKQTADAILREVLGAPSAATSAPVLSPPAPTTFAPTTRSQFNSSHGADASIPTSYMKSAPAAGTTFPSMPSASATAAADGIRPVYIASRSDLERTFTTMMPFFENKESEHNWLNREQSMIKIRGLLVSGAHRQFGETLFVAQLKAVQEGILKCISSLRTTLSMHAIHLVQELAMELGDDLAPCVEAFLIHLVGMAGFTKKLIANATQEAAAAIMVNVSFRPLYLQLIWQAFQEKNVATRTAAAEHLCTVLNTHAAHRKHAVESHGGLDLLEKCMRKGVGDSNPAARTKSREAFWIFHRHWAAQANALLNSLDPAIRKQVAALAPSDVETDTIVEQQPKADGGPVRVRPGGASMALIQAKKAAALKAAQERDRKKAEDAAAAHEARVAAARAALAEQQQQQQQVQKHLEQQASVEDFVTPVAANNKKGTGFMPIKNRSLHHPGGQGAGAANLKPATELTVVISPTAHQRIQTAISVPLPTSPTPAVTPNARIKSKNLSQTSWETPPHPRSPGLSPVSARSRAISSSSYSSQGSSSSARMQGAASTPRSNRAPPVTHSTLKADLENLSIDGIDGIDDGEVTADATQQARFATSSRDNGTGEDDTLQMNAPEDASMDLMGMDFNSPFKMPASGGRAVKTQSVLLERQNALDALQQTPQPKSHRTISTSSTSSTNSSTTPASASVRRSGLPRPVSTMHSPSPSASASHISAGHIHAPTTSHRVLSSTPSRRAPTNGVSTALENRAKRLDAQASTASASPAKAKPEVWTWIQALMDGTADLRTFRRLARLSSEFGISATKAADERTEQDDEMVLERGPFSNVAWATKSDGAFSSGLQAWLEGGLFGKLFDGLKRYLCVGDGGGSGELQMSAQVVLLRLVENQFSLFGATDREGELLDVVLQSITLLCGTRTSCVASSSIVAGRAALQGFESILGAWSGRCDPVLGFDALLSRSLSDASTVAVLRSGFTPLLVRLPAQLVLEDFLPRLAPLLTSTLHHASPEKRLTAVTVLRHLNDMVRIDAQDSHTRIFDALGLTIRDDDDQAELKSKRALLDVLMYYFSKN.

4 disordered regions span residues 258 to 287 (ATSA…HGAD), 735 to 793 (LSQT…PPVT), 888 to 946 (ALQQ…HISA), and 953 to 972 (TTSH…TNGV). Over residues 277 to 287 (RSQFNSSHGAD) the composition is skewed to polar residues. Low complexity-rich tracts occupy residues 755 to 782 (SARS…GAAS), 900 to 919 (TIST…ASAS), and 933 to 946 (HSPS…HISA). Over residues 953–964 (TTSHRVLSSTPS) the composition is skewed to polar residues.

It belongs to the CLASP family. As to quaternary structure, interacts with microtubules.

The protein localises to the cytoplasm. Its subcellular location is the cytoskeleton. The protein resides in the nucleus. It localises to the spindle. Microtubule binding protein that promotes the stabilization of dynamic microtubules. Required for mitotic spindle formation. The polypeptide is Protein STU1 (STU1) (Mycosarcoma maydis (Corn smut fungus)).